The sequence spans 671 residues: DNA ligase (671 aa).

Residues 34 to 38 (DAEYD), 83 to 84 (SL), and E115 each bind NAD(+). The active-site N6-AMP-lysine intermediate is the K117. The NAD(+) site is built by R138, E174, K291, and K315. 4 residues coordinate Zn(2+): C409, C412, C427, and C432. Residues 589–671 (RSGGPLTGKS…LQMIDTLEEA (83 aa)) enclose the BRCT domain.

It belongs to the NAD-dependent DNA ligase family. LigA subfamily. Mg(2+) is required as a cofactor. Mn(2+) serves as cofactor.

The catalysed reaction is NAD(+) + (deoxyribonucleotide)n-3'-hydroxyl + 5'-phospho-(deoxyribonucleotide)m = (deoxyribonucleotide)n+m + AMP + beta-nicotinamide D-nucleotide.. DNA ligase that catalyzes the formation of phosphodiester linkages between 5'-phosphoryl and 3'-hydroxyl groups in double-stranded DNA using NAD as a coenzyme and as the energy source for the reaction. It is essential for DNA replication and repair of damaged DNA. In Syntrophotalea carbinolica (strain DSM 2380 / NBRC 103641 / GraBd1) (Pelobacter carbinolicus), this protein is DNA ligase.